A 393-amino-acid polypeptide reads, in one-letter code: S-adenosylmethionine synthase (393 aa).

A Mg(2+)-binding site is contributed by Glu9. His15 lines the ATP pocket. Residue Glu43 participates in K(+) binding. Glu56 and Gln99 together coordinate L-methionine. Residues 167-169 (DGK), 235-238 (SGRF), Asp246, 252-253 (RK), Ala269, Lys273, and Lys277 each bind ATP. Residue Asp246 coordinates L-methionine. Lys277 provides a ligand contact to L-methionine.

This sequence belongs to the AdoMet synthase family. In terms of assembly, homotetramer. Mn(2+) serves as cofactor. Requires Mg(2+) as cofactor. Co(2+) is required as a cofactor. It depends on K(+) as a cofactor.

It localises to the cytoplasm. It carries out the reaction L-methionine + ATP + H2O = S-adenosyl-L-methionine + phosphate + diphosphate. It participates in amino-acid biosynthesis; S-adenosyl-L-methionine biosynthesis; S-adenosyl-L-methionine from L-methionine: step 1/1. Its function is as follows. Catalyzes the formation of S-adenosylmethionine from methionine and ATP. The reaction comprises two steps that are both catalyzed by the same enzyme: formation of S-adenosylmethionine (AdoMet) and triphosphate, and subsequent hydrolysis of the triphosphate. The protein is S-adenosylmethionine synthase (SAMS) of Litchi chinensis (Lychee).